Reading from the N-terminus, the 474-residue chain is Adenosylhomocysteinase (474 aa).

Thr-61, Asp-136, and Glu-196 together coordinate substrate. 197–199 (TTT) is a binding site for NAD(+). Residues Lys-226 and Asp-230 each contribute to the substrate site. Residues Asn-231, 260-265 (GYGDVG), Glu-283, Asn-318, 339-341 (IGH), and Asn-384 each bind NAD(+).

Belongs to the adenosylhomocysteinase family. It depends on NAD(+) as a cofactor.

It localises to the cytoplasm. It catalyses the reaction S-adenosyl-L-homocysteine + H2O = L-homocysteine + adenosine. The protein operates within amino-acid biosynthesis; L-homocysteine biosynthesis; L-homocysteine from S-adenosyl-L-homocysteine: step 1/1. May play a key role in the regulation of the intracellular concentration of adenosylhomocysteine. The chain is Adenosylhomocysteinase from Ralstonia pickettii (strain 12J).